The sequence spans 30 residues: Thermophilic aminopeptidase 1 alpha chain (30 aa).

This sequence belongs to the peptidase M42 family. In terms of assembly, 12 chains of two different but homologous types, alpha and beta, which can combine in various ratios. A divalent metal cation serves as cofactor.

Functionally, metalloenzyme of broad specificity, releasing all N-terminal amino acids. The chain is Thermophilic aminopeptidase 1 alpha chain from Geobacillus stearothermophilus (Bacillus stearothermophilus).